The sequence spans 133 residues: Small ribosomal subunit protein uS9 (133 aa).

The interval 102-133 (KPKGLLTRDPREVERKKYGLKKARRAPQFSKR) is disordered. Residues 107–118 (LTRDPREVERKK) show a composition bias toward basic and acidic residues. The span at 119 to 133 (YGLKKARRAPQFSKR) shows a compositional bias: basic residues.

It belongs to the universal ribosomal protein uS9 family.

The protein is Small ribosomal subunit protein uS9 of Deinococcus deserti (strain DSM 17065 / CIP 109153 / LMG 22923 / VCD115).